The primary structure comprises 379 residues: Cytochrome b (379 aa).

The next 4 membrane-spanning stretches (helical) occupy residues 33–53, 77–98, 113–133, and 178–198; these read FGSLLGICLAVQILTGLFLAM, WILRYLHANGASMFFICLYIHV, WNIGVILLFAVMATAFMGYVL, and FFAFHFLLPFIISAMVMVHLL. Heme b is bound by residues His-83 and His-97. Positions 182 and 196 each coordinate heme b. His-201 serves as a coordination point for a ubiquinone. 4 helical membrane passes run 226–246, 288–308, 320–340, and 347–367; these read IKDILGLLLMIMVLLMLVLFS, LGGVMALVLSILILIIIPVLH, LSQCLFWLLVADLLXVTWIGG, and YVIXGQLASIXXXXIXIXXXX.

The protein belongs to the cytochrome b family. In terms of assembly, the cytochrome bc1 complex contains 11 subunits: 3 respiratory subunits (MT-CYB, CYC1 and UQCRFS1), 2 core proteins (UQCRC1 and UQCRC2) and 6 low-molecular weight proteins (UQCRH/QCR6, UQCRB/QCR7, UQCRQ/QCR8, UQCR10/QCR9, UQCR11/QCR10 and a cleavage product of UQCRFS1). This cytochrome bc1 complex then forms a dimer. Heme b serves as cofactor.

The protein localises to the mitochondrion inner membrane. In terms of biological role, component of the ubiquinol-cytochrome c reductase complex (complex III or cytochrome b-c1 complex) that is part of the mitochondrial respiratory chain. The b-c1 complex mediates electron transfer from ubiquinol to cytochrome c. Contributes to the generation of a proton gradient across the mitochondrial membrane that is then used for ATP synthesis. The chain is Cytochrome b (MT-CYB) from Myotis goudotii (Malagasy mouse-eared bat).